Reading from the N-terminus, the 304-residue chain is GDP-6-deoxy-D-mannose reductase (304 aa).

Residues 13-14 (FV) and 39-40 (DL) contribute to the NADP(+) site. 105 to 106 (SG) provides a ligand contact to substrate. NADP(+) is bound at residue Y131. Substrate-binding positions include N160, R200, and 260-263 (RRAE).

Belongs to the NAD(P)-dependent epimerase/dehydratase family. GDP-6-deoxy-D-mannose reductase subfamily.

The enzyme catalyses GDP-alpha-D-rhamnose + NAD(+) = GDP-4-dehydro-alpha-D-rhamnose + NADH + H(+). It catalyses the reaction GDP-alpha-D-rhamnose + NADP(+) = GDP-4-dehydro-alpha-D-rhamnose + NADPH + H(+). Its function is as follows. Reductase that catalyzes the conversion of GDP-6-deoxy-D-mannose to GDP-4-dehydro-6-deoxy-D-mannose (GDP-D-rhamnose). The polypeptide is GDP-6-deoxy-D-mannose reductase (rmd) (Pseudomonas aeruginosa (strain ATCC 15692 / DSM 22644 / CIP 104116 / JCM 14847 / LMG 12228 / 1C / PRS 101 / PAO1)).